Here is a 449-residue protein sequence, read N- to C-terminus: Trigger factor (449 aa).

The region spanning 172–257 is the PPIase FKBP-type domain; that stretch reads GDRVTVDFVG…LKQVEWAHLP (86 aa).

The protein belongs to the FKBP-type PPIase family. Tig subfamily.

The protein resides in the cytoplasm. The enzyme catalyses [protein]-peptidylproline (omega=180) = [protein]-peptidylproline (omega=0). Its function is as follows. Involved in protein export. Acts as a chaperone by maintaining the newly synthesized protein in an open conformation. Functions as a peptidyl-prolyl cis-trans isomerase. This Ralstonia nicotianae (strain ATCC BAA-1114 / GMI1000) (Ralstonia solanacearum) protein is Trigger factor.